Reading from the N-terminus, the 109-residue chain is A-type ATP synthase subunit F (109 aa).

The protein belongs to the V-ATPase F subunit family. As to quaternary structure, has multiple subunits with at least A(3), B(3), C, D, E, F, H, I and proteolipid K(x).

The protein resides in the cell membrane. Component of the A-type ATP synthase that produces ATP from ADP in the presence of a proton gradient across the membrane. This is A-type ATP synthase subunit F from Haloquadratum walsbyi (strain DSM 16790 / HBSQ001).